The chain runs to 68 residues: Cytotoxic linear peptide IsCT (68 aa).

Positions 1-23 are cleaved as a signal peptide; sequence MKTQFAILLVALVLFQMFAQSDA. Residue Phe36 is modified to Phenylalanine amide. Residues 40–68 constitute a propeptide that is removed on maturation; that stretch reads GLSDLDGLDELFDGEISKADRDFLRELMR.

The protein belongs to the non-disulfide-bridged peptide (NDBP) superfamily. Short antimicrobial peptide (group 4) family. In terms of processing, isCTf is an enzymatic proteolytic cleavage product of IsCT by the proteases present in the venom. Expressed by the venom gland.

The protein localises to the secreted. It localises to the target cell membrane. Functionally, shows weak hemolytic activity and antibacterial activity against both Gram-positive and Gram-negative bacteria probably by forming pores in the cell membrane. IsCT adopts an amphipathic alpha-helical structure. Shows neither hemolytic, nor antibacterial activities, probably because it cannot adopt amphipathic alpha-helical structure. This Opisthacanthus madagascariensis (Scorpion) protein is Cytotoxic linear peptide IsCT.